We begin with the raw amino-acid sequence, 388 residues long: Succinate--CoA ligase [ADP-forming] subunit beta (388 aa).

The 236-residue stretch at 9-244 folds into the ATP-grasp domain; the sequence is KEILRQAGVP…LDEEDPAEVE (236 aa). ATP is bound by residues Lys46, 53–55, Glu99, Ala102, and Glu107; that span reads GRG. Positions 199 and 213 each coordinate Mg(2+). Substrate-binding positions include Asn264 and 321 to 323; that span reads GIM.

It belongs to the succinate/malate CoA ligase beta subunit family. In terms of assembly, heterotetramer of two alpha and two beta subunits. Mg(2+) serves as cofactor.

It carries out the reaction succinate + ATP + CoA = succinyl-CoA + ADP + phosphate. It catalyses the reaction GTP + succinate + CoA = succinyl-CoA + GDP + phosphate. It participates in carbohydrate metabolism; tricarboxylic acid cycle; succinate from succinyl-CoA (ligase route): step 1/1. Functionally, succinyl-CoA synthetase functions in the citric acid cycle (TCA), coupling the hydrolysis of succinyl-CoA to the synthesis of either ATP or GTP and thus represents the only step of substrate-level phosphorylation in the TCA. The beta subunit provides nucleotide specificity of the enzyme and binds the substrate succinate, while the binding sites for coenzyme A and phosphate are found in the alpha subunit. This chain is Succinate--CoA ligase [ADP-forming] subunit beta, found in Albidiferax ferrireducens (strain ATCC BAA-621 / DSM 15236 / T118) (Rhodoferax ferrireducens).